Here is a 296-residue protein sequence, read N- to C-terminus: Urease accessory protein UreD (296 aa).

The protein belongs to the UreD family. In terms of assembly, ureD, UreF and UreG form a complex that acts as a GTP-hydrolysis-dependent molecular chaperone, activating the urease apoprotein by helping to assemble the nickel containing metallocenter of UreC. The UreE protein probably delivers the nickel.

It is found in the cytoplasm. In terms of biological role, required for maturation of urease via the functional incorporation of the urease nickel metallocenter. The polypeptide is Urease accessory protein UreD (Synechococcus sp. (strain CC9311)).